Here is a 117-residue protein sequence, read N- to C-terminus: Large ribosomal subunit protein bL20 (117 aa).

The protein belongs to the bacterial ribosomal protein bL20 family.

In terms of biological role, binds directly to 23S ribosomal RNA and is necessary for the in vitro assembly process of the 50S ribosomal subunit. It is not involved in the protein synthesizing functions of that subunit. This is Large ribosomal subunit protein bL20 from Nitratidesulfovibrio vulgaris (strain DSM 19637 / Miyazaki F) (Desulfovibrio vulgaris).